Consider the following 549-residue polypeptide: Glucose-6-phosphate isomerase (549 aa).

The active-site Proton donor is the Glu-355. Active-site residues include His-387 and Lys-515.

It belongs to the GPI family.

Its subcellular location is the cytoplasm. The catalysed reaction is alpha-D-glucose 6-phosphate = beta-D-fructose 6-phosphate. It participates in carbohydrate biosynthesis; gluconeogenesis. Its pathway is carbohydrate degradation; glycolysis; D-glyceraldehyde 3-phosphate and glycerone phosphate from D-glucose: step 2/4. In terms of biological role, catalyzes the reversible isomerization of glucose-6-phosphate to fructose-6-phosphate. The protein is Glucose-6-phosphate isomerase of Haemophilus influenzae (strain ATCC 51907 / DSM 11121 / KW20 / Rd).